The chain runs to 324 residues: Holliday junction branch migration complex subunit RuvB (324 aa).

Positions 1-168 (MEDLALRPKT…FGIVEHLEYY (168 aa)) are large ATPase domain (RuvB-L). ATP contacts are provided by residues L6, R7, G48, K51, T52, T53, 115-117 (EDF), R158, Y168, and R205. T52 provides a ligand contact to Mg(2+). The small ATPAse domain (RuvB-S) stretch occupies residues 169–239 (TPEELAQGVM…RALEALAALG (71 aa)). A head domain (RuvB-H) region spans residues 242–324 (ELGLEKRDRE…PPPVGPLLEP (83 aa)). 2 residues coordinate DNA: R297 and R302.

The protein belongs to the RuvB family. In terms of assembly, homohexamer. Forms an RuvA(8)-RuvB(12)-Holliday junction (HJ) complex. HJ DNA is sandwiched between 2 RuvA tetramers; dsDNA enters through RuvA and exits via RuvB. An RuvB hexamer assembles on each DNA strand where it exits the tetramer. Each RuvB hexamer is contacted by two RuvA subunits (via domain III) on 2 adjacent RuvB subunits; this complex drives branch migration. In the full resolvosome a probable DNA-RuvA(4)-RuvB(12)-RuvC(2) complex forms which resolves the HJ.

It localises to the cytoplasm. It carries out the reaction ATP + H2O = ADP + phosphate + H(+). Its activity is regulated as follows. The ATPase activity of RuvB is enhanced by RuvA. Its function is as follows. The RuvA-RuvB-RuvC complex processes Holliday junction (HJ) DNA during genetic recombination and DNA repair, while the RuvA-RuvB complex plays an important role in the rescue of blocked DNA replication forks via replication fork reversal (RFR). RuvA specifically binds to HJ cruciform DNA, conferring on it an open structure. The RuvB hexamer acts as an ATP-dependent pump, pulling dsDNA into and through the RuvAB complex. RuvB forms 2 homohexamers on either side of HJ DNA bound by 1 or 2 RuvA tetramers; 4 subunits per hexamer contact DNA at a time. Coordinated motions by a converter formed by DNA-disengaged RuvB subunits stimulates ATP hydrolysis and nucleotide exchange. Immobilization of the converter enables RuvB to convert the ATP-contained energy into a lever motion, pulling 2 nucleotides of DNA out of the RuvA tetramer per ATP hydrolyzed, thus driving DNA branch migration. The RuvB motors rotate together with the DNA substrate, which together with the progressing nucleotide cycle form the mechanistic basis for DNA recombination by continuous HJ branch migration. Branch migration allows RuvC to scan DNA until it finds its consensus sequence, where it cleaves and resolves cruciform DNA. Has Mg(2+)-, DNA-dependent ATPase activity; dsDNA and supercoiled DNA but not ssDNA stimulate activity. Binds to linear dsDNA in the absence of ATP or ATP-gamma-S. This subunit can promote Holliday junction migration alone in vitro. Partially complements an E.coli deletion for UV sensitivity. This is Holliday junction branch migration complex subunit RuvB from Thermus thermophilus.